Here is a 545-residue protein sequence, read N- to C-terminus: MAKDIYFNEDARKSLLSGVEKLSNAVKVTLGPKGRNVLIDKKFGSPTVTKDGVSVAREIELENPFENMGAQLLKEVAIKTNDVAGDGTTTATVLAYAIAREGLKNVSSGINPIGIKKGIDHAVNLAAEKIRQSAKKITTKEEIAQVASISANNDSYIGEKIAEAMDKVGKDGVITVEESKTFDTTISYVEGMQFDRGYLSPYFSTNKENMSVNFDDAFILIYEKKISSIKELLPVLEKVLGTNKPLLIIAEDIEGDALAALVLNSVRGALKVCAIKSPGFGDRRKAMLEDIAVLTGGVLISEELGLTLETVEIEQLGQAKTIKVDKDNTTIINTGNKEQIKERSELIKKQIEDSTSEYDKEKLQERLAKLVGGVAVINVGAVTEVELKEKKHRVEDALSATRAAVEEGVVPGGGSTLIEVAMYLDTIDTSKLSYEEKQGFEIVKRSLEEPMRQIISNAGFEGSIYIHQIKTEKKGLGFDASSFKWVNMIESGIIDPAKVTRSALQNAASIAGLLLTTECAITDIKEEKNTSGGGGYPMDPGMGMM.

ATP contacts are provided by residues 29-32 (TLGP), K50, 86-90 (DGTTT), G413, and D495.

Belongs to the chaperonin (HSP60) family. In terms of assembly, forms a cylinder of 14 subunits composed of two heptameric rings stacked back-to-back. Interacts with the co-chaperonin GroES.

It is found in the cytoplasm. The enzyme catalyses ATP + H2O + a folded polypeptide = ADP + phosphate + an unfolded polypeptide.. Functionally, together with its co-chaperonin GroES, plays an essential role in assisting protein folding. The GroEL-GroES system forms a nano-cage that allows encapsulation of the non-native substrate proteins and provides a physical environment optimized to promote and accelerate protein folding. The protein is Chaperonin GroEL of Borreliella burgdorferi (strain ATCC 35210 / DSM 4680 / CIP 102532 / B31) (Borrelia burgdorferi).